The sequence spans 306 residues: Putative HPr kinase/phosphorylase 2 (306 aa).

Residues His-138 and Lys-159 contribute to the active site. Residue 153-160 participates in ATP binding; sequence GESGVGKS. Position 160 (Ser-160) interacts with Mg(2+). Asp-177 acts as the Proton acceptor; for phosphorylation activity. Proton donor; for dephosphorylation activity in catalysis. The important for the catalytic mechanism of both phosphorylation and dephosphorylation stretch occupies residues 201 to 210; sequence LALRSVGLLN. An important for the catalytic mechanism of dephosphorylation region spans residues 264 to 269; the sequence is QLQPGR.

This sequence belongs to the HPrK/P family. As to quaternary structure, homohexamer. It depends on Mg(2+) as a cofactor.

It carries out the reaction [HPr protein]-L-serine + ATP = [HPr protein]-O-phospho-L-serine + ADP + H(+). The enzyme catalyses [HPr protein]-O-phospho-L-serine + phosphate + H(+) = [HPr protein]-L-serine + diphosphate. Its function is as follows. Catalyzes the ATP- as well as the pyrophosphate-dependent phosphorylation of a specific serine residue in HPr, a phosphocarrier protein of the phosphoenolpyruvate-dependent sugar phosphotransferase system (PTS). HprK/P also catalyzes the pyrophosphate-producing, inorganic phosphate-dependent dephosphorylation (phosphorolysis) of seryl-phosphorylated HPr (P-Ser-HPr). The two antagonistic activities of HprK/P are regulated by several intracellular metabolites, which change their concentration in response to the absence or presence of rapidly metabolisable carbon sources (glucose, fructose, etc.) in the growth medium. Also phosphorylates/dephosphorylates the HPr-like catabolite repression protein crh on a specific serine residue. Therefore, by controlling the phosphorylation state of HPr and crh, HPrK/P is a sensor enzyme that plays a major role in the regulation of carbon metabolism and sugar transport: it mediates carbon catabolite repression (CCR), and regulates PTS-catalyzed carbohydrate uptake and inducer exclusion. The chain is Putative HPr kinase/phosphorylase 2 (hprK2) from Oceanobacillus iheyensis (strain DSM 14371 / CIP 107618 / JCM 11309 / KCTC 3954 / HTE831).